The chain runs to 277 residues: Phosphate import ATP-binding protein PstB 2 (277 aa).

Residues 31-272 (IEVPGLSLFY…PAKKQTEDYI (242 aa)) enclose the ABC transporter domain. Residue 63 to 70 (GPSGCGKS) coordinates ATP.

It belongs to the ABC transporter superfamily. Phosphate importer (TC 3.A.1.7) family. As to quaternary structure, the complex is composed of two ATP-binding proteins (PstB), two transmembrane proteins (PstC and PstA) and a solute-binding protein (PstS).

Its subcellular location is the cell inner membrane. It catalyses the reaction phosphate(out) + ATP + H2O = ADP + 2 phosphate(in) + H(+). Functionally, part of the ABC transporter complex PstSACB involved in phosphate import. Responsible for energy coupling to the transport system. The protein is Phosphate import ATP-binding protein PstB 2 of Pseudomonas putida (strain ATCC 47054 / DSM 6125 / CFBP 8728 / NCIMB 11950 / KT2440).